Consider the following 439-residue polypeptide: Secreted aspartic protease LUC8 (439 aa).

A signal peptide spans 1-20 (MMHAFHHLAVLLIGSLPASA). N-linked (GlcNAc...) asparagine glycosylation is found at asparagine 33 and asparagine 54. In terms of domain architecture, Peptidase A1 spans 51–435 (YLFNITVGTP…DFETQSFGLA (385 aa)). Aspartate 69 is a catalytic residue. N-linked (GlcNAc...) asparagine glycosylation is found at asparagine 110, asparagine 126, asparagine 179, and asparagine 289. The active site involves aspartate 300. 2 N-linked (GlcNAc...) asparagine glycosylation sites follow: asparagine 329 and asparagine 373. Cysteine 355 and cysteine 391 are joined by a disulfide.

The protein belongs to the peptidase A1 family.

The protein localises to the secreted. In terms of biological role, secreted aspartic protease; part of the gene cluster that mediates the biosynthesis of the mycotoxin lucilactaene and the lucilactaene-related compound NG-391 that act as cell cycle inhibitors with potent growth inhibitory activity against malarial parasites, moderate growth inhibitory activity against cancer cells, and no activity against bacteria and fungi. Within the cluster, LUC7 and LUC8 encode proteins which are not commonly involved in the biosynthesis of secondary metabolites and are not essential for lucilactaene biosynthesis. The sequence is that of Secreted aspartic protease LUC8 from Fusarium sp.